The following is a 291-amino-acid chain: Early E4 34 kDa protein (291 aa).

Belongs to the adenoviridae E4 30 to 34 kDa protein family. In terms of assembly, interacts with E1B-55k.

The protein resides in the host nucleus. It is found in the host cytoplasm. Plays a major role to prevent cellular inhibition of viral genome replication by nuclear bodies. Assembles an SCF-like E3 ubiquitin ligase complex based on the cellular proteins ELOB, ELOC, CUL5 and RBX1, in cooperation with viral E1B-55K. This viral RING-type ligase ubiquitinates cellular substrates prior to proteasomal degradation: p53/TP53, LIG4, MRE11-RAD50-NBS1 (MRN) complex, ITGA3, DAXX and BLM. In Homo sapiens (Human), this protein is Early E4 34 kDa protein.